The following is a 327-amino-acid chain: Lipoyl synthase (327 aa).

The [4Fe-4S] cluster site is built by C74, C79, C85, C100, C104, C107, and S314. The Radical SAM core domain maps to 86–303; the sequence is FSGGTATFMI…AEEGERMGFK (218 aa).

Belongs to the radical SAM superfamily. Lipoyl synthase family. The cofactor is [4Fe-4S] cluster.

The protein localises to the cytoplasm. It carries out the reaction [[Fe-S] cluster scaffold protein carrying a second [4Fe-4S](2+) cluster] + N(6)-octanoyl-L-lysyl-[protein] + 2 oxidized [2Fe-2S]-[ferredoxin] + 2 S-adenosyl-L-methionine + 4 H(+) = [[Fe-S] cluster scaffold protein] + N(6)-[(R)-dihydrolipoyl]-L-lysyl-[protein] + 4 Fe(3+) + 2 hydrogen sulfide + 2 5'-deoxyadenosine + 2 L-methionine + 2 reduced [2Fe-2S]-[ferredoxin]. It participates in protein modification; protein lipoylation via endogenous pathway; protein N(6)-(lipoyl)lysine from octanoyl-[acyl-carrier-protein]: step 2/2. Catalyzes the radical-mediated insertion of two sulfur atoms into the C-6 and C-8 positions of the octanoyl moiety bound to the lipoyl domains of lipoate-dependent enzymes, thereby converting the octanoylated domains into lipoylated derivatives. This is Lipoyl synthase from Pseudomonas paraeruginosa (strain DSM 24068 / PA7) (Pseudomonas aeruginosa (strain PA7)).